The primary structure comprises 158 residues: Probable host range protein 2-1 (158 aa).

The protein belongs to the poxviridae C7 protein family.

In terms of biological role, plays a role for multiplication of the virus in different cell types. In Oryctolagus cuniculus (Rabbit), this protein is Probable host range protein 2-1.